We begin with the raw amino-acid sequence, 88 residues long: Centromere protein W (88 aa).

Belongs to the CENP-W/WIP1 family. As to quaternary structure, heterodimer with CENPT; this dimer coassembles with CENPS-CENPX heterodimers at centromeres to form the tetrameric CENP-T-W-S-X complex, which is a subcomplex of the large constitutive centromere-associated network (CCAN, also known as the interphase centromere complex or ICEN). Interacts with NPM1. In terms of tissue distribution, highly expressed in ovary, liver, lung and pancreas and to a lower extent in breast and gastrointestinal tract cancers; such as those of the colon, rectum and stomach. Overexpressed in high grade breast invasive tumors. Expressed in many cancer cell types.

The protein localises to the nucleus. Its subcellular location is the chromosome. It is found in the centromere. The protein resides in the kinetochore. It localises to the nucleus matrix. The protein localises to the nucleolus. In terms of biological role, component of the CENPA-NAC (nucleosome-associated) complex, a complex that plays a central role in assembly of kinetochore proteins, mitotic progression and chromosome segregation. The CENPA-NAC complex recruits the CENPA-CAD (nucleosome distal) complex and may be involved in incorporation of newly synthesized CENPA into centromeres. Part of a nucleosome-associated complex that binds specifically to histone H3-containing nucleosomes at the centromere, as opposed to nucleosomes containing CENPA. Component of the heterotetrameric CENP-T-W-S-X complex that binds and supercoils DNA, and plays an important role in kinetochore assembly. CENPW has a fundamental role in kinetochore assembly and function. It is one of the inner kinetochore proteins, with most further proteins binding downstream. Required for normal chromosome organization and normal progress through mitosis. The protein is Centromere protein W (CENPW) of Homo sapiens (Human).